A 318-amino-acid polypeptide reads, in one-letter code: Transcriptional regulator NovG (318 aa).

A compositionally biased stretch (polar residues) spans 146–156 (VASLRSSSTAG). The tract at residues 146–176 (VASLRSSSTAGTVGRRTGQDGRSRPNDGTDG) is disordered. The segment covering 162–176 (TGQDGRSRPNDGTDG) has biased composition (basic and acidic residues).

It belongs to the ParB family.

In terms of biological role, transcription regulator that specifically activates expression of genes involved in the novobiocin biosynthesis pathway. Binds 5'-GTTCRACTG(N)(11)CRGTYGAAC-3' DNA sequence. The protein is Transcriptional regulator NovG (novG) of Streptomyces niveus (Streptomyces spheroides).